Reading from the N-terminus, the 617-residue chain is Elongation factor 4 (617 aa).

Positions 17-198 (AIIRNFCIIA…KIVRDLPAPV (182 aa)) constitute a tr-type G domain. GTP is bound by residues 29-34 (DHGKST) and 145-148 (NKID).

The protein belongs to the TRAFAC class translation factor GTPase superfamily. Classic translation factor GTPase family. LepA subfamily.

The protein resides in the cell membrane. It catalyses the reaction GTP + H2O = GDP + phosphate + H(+). Required for accurate and efficient protein synthesis under certain stress conditions. May act as a fidelity factor of the translation reaction, by catalyzing a one-codon backward translocation of tRNAs on improperly translocated ribosomes. Back-translocation proceeds from a post-translocation (POST) complex to a pre-translocation (PRE) complex, thus giving elongation factor G a second chance to translocate the tRNAs correctly. Binds to ribosomes in a GTP-dependent manner. The chain is Elongation factor 4 from Arthrobacter sp. (strain FB24).